Consider the following 207-residue polypeptide: Coiled-coil domain-containing protein 25 (207 aa).

The Extracellular segment spans residues methionine 1–aspartate 104. The interval lysine 20 to glutamate 24 is DNA-binding. A helical transmembrane segment spans residues isoleucine 105–valine 121. The stretch at arginine 112–methionine 189 forms a coiled coil. Topologically, residues glutamate 122–methionine 207 are cytoplasmic. Residues tyrosine 140–lysine 183 show a composition bias toward basic and acidic residues. The disordered stretch occupies residues tyrosine 140–methionine 207. The segment covering asparagine 184–glutamate 198 has biased composition (polar residues). Serine 203 carries the post-translational modification Phosphoserine.

The protein belongs to the CCDC25 family. As to quaternary structure, interacts (via cytoplasmic region) with ILK.

It localises to the cell membrane. The protein localises to the endomembrane system. Transmembrane receptor that senses neutrophil extracellular traps (NETs) and triggers the ILK-PARVB pathway to enhance cell motility. NETs are mainly composed of DNA fibers and are released by neutrophils to bind pathogens during inflammation. Specifically binds NETs on its extracellular region, in particular the 8-OHdG-enriched DNA present in NETs, and recruits ILK, initiating the ILK-PARVB cascade to induce cytoskeleton rearrangement and directional migration of cells. The protein is Coiled-coil domain-containing protein 25 of Danio rerio (Zebrafish).